The chain runs to 21 residues: Peptide PGLa-BM2 (21 aa).

At Ala21 the chain carries Alanine amide.

Expressed by the skin glands.

The protein localises to the secreted. Its function is as follows. Antimicrobial peptide. The chain is Peptide PGLa-BM2 from Xenopus boumbaensis (Mawa clawed frog).